Reading from the N-terminus, the 520-residue chain is Sodium-dependent dicarboxylate transporter SdcS (520 aa).

14 helical membrane passes run 30–50 (AGQL…LLFF), 55–75 (LPWE…WWIT), 77–97 (AIPI…GHIL), 104–124 (SEYG…AIAM), 160–180 (SMFV…LAII), 207–227 (IGYA…PLII), 242–262 (FAKW…ITWL), 298–318 (KVVQ…EFLL), 323–343 (VTSS…LFVI), 362–382 (ELPW…KGIS), 399–419 (GVSP…LTEV), 428–448 (MILP…LLLM), 452–472 (AMAA…AIIF), and 491–511 (LISA…VLGI).

The protein belongs to the SLC13A/DASS transporter (TC 2.A.47) family. NADC subfamily.

It is found in the cell membrane. Mediates the transport of the dicarboxylates fumarate, malate, and succinate across the cytoplasmic membrane via a Na(+)-electrochemical gradient. This Staphylococcus aureus (strain bovine RF122 / ET3-1) protein is Sodium-dependent dicarboxylate transporter SdcS (sdcS).